The sequence spans 64 residues: Large ribosomal subunit protein bL33 (64 aa).

The protein belongs to the bacterial ribosomal protein bL33 family.

The polypeptide is Large ribosomal subunit protein bL33 (Parasynechococcus marenigrum (strain WH8102)).